Consider the following 327-residue polypeptide: Methionyl-tRNA formyltransferase (327 aa).

(6S)-5,6,7,8-tetrahydrofolate is bound at residue 121–124 (SLLP).

It belongs to the Fmt family.

It catalyses the reaction L-methionyl-tRNA(fMet) + (6R)-10-formyltetrahydrofolate = N-formyl-L-methionyl-tRNA(fMet) + (6S)-5,6,7,8-tetrahydrofolate + H(+). In terms of biological role, attaches a formyl group to the free amino group of methionyl-tRNA(fMet). The formyl group appears to play a dual role in the initiator identity of N-formylmethionyl-tRNA by promoting its recognition by IF2 and preventing the misappropriation of this tRNA by the elongation apparatus. This is Methionyl-tRNA formyltransferase from Burkholderia pseudomallei (strain K96243).